A 273-amino-acid chain; its full sequence is Urease accessory protein UreD (273 aa).

This sequence belongs to the UreD family. UreD, UreF and UreG form a complex that acts as a GTP-hydrolysis-dependent molecular chaperone, activating the urease apoprotein by helping to assemble the nickel containing metallocenter of UreC. The UreE protein probably delivers the nickel.

The protein resides in the cytoplasm. Functionally, required for maturation of urease via the functional incorporation of the urease nickel metallocenter. This chain is Urease accessory protein UreD, found in Rhizobium rhizogenes (strain K84 / ATCC BAA-868) (Agrobacterium radiobacter).